The primary structure comprises 175 residues: MPRRREVPKREILPDPKHHSELLAKFINVLMVSGKKSIAEKITYGALSVMEERVKKIKKNEEDGSETGSSGSAGAVLRYFEEALDNVRPSVEVRSRRVGGATYQVPVEVRHDRSIALGMRWIVQAARTRGEKGMMLRLAGELMDAYENKGSAVKKREDTHKMAKANQAFAHFRWN.

Belongs to the universal ribosomal protein uS7 family. As to quaternary structure, part of the 30S ribosomal subunit. Contacts proteins S9 and S11.

In terms of biological role, one of the primary rRNA binding proteins, it binds directly to 16S rRNA where it nucleates assembly of the head domain of the 30S subunit. Is located at the subunit interface close to the decoding center, probably blocks exit of the E-site tRNA. The sequence is that of Small ribosomal subunit protein uS7 from Legionella pneumophila (strain Paris).